A 351-amino-acid polypeptide reads, in one-letter code: Methionine import ATP-binding protein MetN (351 aa).

The ABC transporter domain occupies 4-249 (VQLDHVSVTF…PKAELTQKFV (246 aa)). 41-48 (GFSGAGKS) lines the ATP pocket.

This sequence belongs to the ABC transporter superfamily. Methionine importer (TC 3.A.1.24) family. In terms of assembly, the complex is composed of two ATP-binding proteins (MetN), two transmembrane proteins (MetI) and a solute-binding protein (MetQ).

The protein localises to the cell membrane. It catalyses the reaction L-methionine(out) + ATP + H2O = L-methionine(in) + ADP + phosphate + H(+). The enzyme catalyses D-methionine(out) + ATP + H2O = D-methionine(in) + ADP + phosphate + H(+). In terms of biological role, part of the ABC transporter complex MetNIQ involved in methionine import. Responsible for energy coupling to the transport system. The protein is Methionine import ATP-binding protein MetN of Lactobacillus delbrueckii subsp. bulgaricus (strain ATCC BAA-365 / Lb-18).